Consider the following 363-residue polypeptide: Putative aryl-alcohol dehydrogenase AAD3 (363 aa).

Belongs to the aldo/keto reductase family. Aldo/keto reductase 2 subfamily.

The protein is Putative aryl-alcohol dehydrogenase AAD3 (AAD3) of Saccharomyces cerevisiae (strain ATCC 204508 / S288c) (Baker's yeast).